Here is a 66-residue protein sequence, read N- to C-terminus: Ocellatin-PT3 (66 aa).

Residues Met-1–Cys-22 form the signal peptide. A propeptide spanning residues Asp-23–Glu-39 is cleaved from the precursor. Val-66 is modified (valine amide).

As to expression, expressed by the skin glands.

The protein resides in the secreted. Has antibacterial activity against Gram-negative bacterium E.coli ATCC 25922 (MIC=320 uM) but not against S.pneumoniae ATCC 700603, S.choleraesuis ATCC 14028 or Gram-positive bacterium S.aureus ATCC 29313. Shows no hemolytic activity and no cytotoxicity. This is Ocellatin-PT3 from Leptodactylus pustulatus (Ceara white-lipped frog).